Reading from the N-terminus, the 300-residue chain is MQTDLSDSSLFNHKSVMTDEILVSVDQYPLISDNKLTAIDATLGGGGHSYQLLKKYPDLKIIGLDHDPFARQSAFIKLEEFKSRIEICPSNFANFEPKEKVSFVIADLGVNSNQIDNPQRGFSFQKDGPLDMRMNPLLEMNAEDLIETLNEKDLADLIFKFGDERLSRKISRRIKKDLQEKGKYSGTKDLAYSIAGCFPPKQRYRKIHPATRTFQALRIAVNKEIEALERFLELAPNWLLPGGIISIISFHSIEDRLVKNSFKGDERLKNLTKKPITPNEKEIENNKRSRSAKLRIAQLK.

S-adenosyl-L-methionine-binding positions include Gly-46–His-48, Asp-65, Phe-92, Asp-107, and Gln-114.

It belongs to the methyltransferase superfamily. RsmH family.

It localises to the cytoplasm. It carries out the reaction cytidine(1402) in 16S rRNA + S-adenosyl-L-methionine = N(4)-methylcytidine(1402) in 16S rRNA + S-adenosyl-L-homocysteine + H(+). In terms of biological role, specifically methylates the N4 position of cytidine in position 1402 (C1402) of 16S rRNA. The protein is Ribosomal RNA small subunit methyltransferase H of Prochlorococcus marinus subsp. pastoris (strain CCMP1986 / NIES-2087 / MED4).